The primary structure comprises 891 residues: Alanine--tRNA ligase (891 aa).

4 residues coordinate Zn(2+): histidine 564, histidine 568, cysteine 677, and histidine 681.

Belongs to the class-II aminoacyl-tRNA synthetase family. Zn(2+) is required as a cofactor.

The protein localises to the cytoplasm. It catalyses the reaction tRNA(Ala) + L-alanine + ATP = L-alanyl-tRNA(Ala) + AMP + diphosphate. In terms of biological role, catalyzes the attachment of alanine to tRNA(Ala) in a two-step reaction: alanine is first activated by ATP to form Ala-AMP and then transferred to the acceptor end of tRNA(Ala). Also edits incorrectly charged Ser-tRNA(Ala) and Gly-tRNA(Ala) via its editing domain. The sequence is that of Alanine--tRNA ligase from Rhodopseudomonas palustris (strain BisA53).